A 306-amino-acid polypeptide reads, in one-letter code: Ribonuclease Z (306 aa).

The Zn(2+) site is built by His-63, His-65, Asp-67, His-68, His-141, Asp-211, and His-269. Residue Asp-67 is the Proton acceptor of the active site.

Belongs to the RNase Z family. As to quaternary structure, homodimer. Zn(2+) serves as cofactor.

It carries out the reaction Endonucleolytic cleavage of RNA, removing extra 3' nucleotides from tRNA precursor, generating 3' termini of tRNAs. A 3'-hydroxy group is left at the tRNA terminus and a 5'-phosphoryl group is left at the trailer molecule.. Zinc phosphodiesterase, which displays some tRNA 3'-processing endonuclease activity. Probably involved in tRNA maturation, by removing a 3'-trailer from precursor tRNA. The protein is Ribonuclease Z of Staphylococcus aureus (strain Mu3 / ATCC 700698).